The chain runs to 370 residues: MNEMTHRTKTRPVKVGNLTIGGNNELIIQSMTTTKTHDVEATVAEIKRLEEAGCQVVRVAVPDERAADAIADIKKQINIPLVADIHFDYRLALKAIEGGIDKVRINPGNIGRRHKVEAVVNAAKERGIPIRIGVNAGSLERHILEKYGYPTADGMVESALHHIKILEDLDFHDIIVSMKASDVNLAIEAYEKAARAFDYPLHLGITESGTLFAGTVKSAAGLGAILSKGIGNTLRISLSADPVEEVKVARELLKSFGLASNAATLISCPTCGRIEIDLISIANEVEEYISTLQVPIKVAVLGCAVNGPGEAREADIGIAGARGEGLLFRKGQVVRKVPEETMVEELKKEIDVIAAEMAAEREKEKETQEQ.

[4Fe-4S] cluster contacts are provided by C268, C271, C303, and E310.

It belongs to the IspG family. [4Fe-4S] cluster is required as a cofactor.

The enzyme catalyses (2E)-4-hydroxy-3-methylbut-2-enyl diphosphate + oxidized [flavodoxin] + H2O + 2 H(+) = 2-C-methyl-D-erythritol 2,4-cyclic diphosphate + reduced [flavodoxin]. It participates in isoprenoid biosynthesis; isopentenyl diphosphate biosynthesis via DXP pathway; isopentenyl diphosphate from 1-deoxy-D-xylulose 5-phosphate: step 5/6. Converts 2C-methyl-D-erythritol 2,4-cyclodiphosphate (ME-2,4cPP) into 1-hydroxy-2-methyl-2-(E)-butenyl 4-diphosphate. The protein is 4-hydroxy-3-methylbut-2-en-1-yl diphosphate synthase (flavodoxin) of Bacillus cereus (strain G9842).